Reading from the N-terminus, the 968-residue chain is RNA polymerase-associated protein RapA (968 aa).

Positions 164-334 (DVGRRHAPRV…FARLRLLDPN (171 aa)) constitute a Helicase ATP-binding domain. 177-184 (DEVGLGKT) serves as a coordination point for ATP. A DEAH box motif is present at residues 280-283 (DEAH). One can recognise a Helicase C-terminal domain in the interval 490–685 (RVEWLMGYLT…ALKAQLEQGR (196 aa)).

The protein belongs to the SNF2/RAD54 helicase family. RapA subfamily. Interacts with the RNAP. Has a higher affinity for the core RNAP than for the holoenzyme. Its ATPase activity is stimulated by binding to RNAP.

Transcription regulator that activates transcription by stimulating RNA polymerase (RNAP) recycling in case of stress conditions such as supercoiled DNA or high salt concentrations. Probably acts by releasing the RNAP, when it is trapped or immobilized on tightly supercoiled DNA. Does not activate transcription on linear DNA. Probably not involved in DNA repair. This is RNA polymerase-associated protein RapA from Salmonella newport (strain SL254).